The sequence spans 192 residues: Ciliary microtubule-associated protein 3 (192 aa).

As to quaternary structure, interacts with proteins involved in ciliary transport, including ARL13B, CETN1, KIF3A, RAB6A, RAB8A, TUBB1 and TUBG1. Interacts with AURKA.

It is found in the cytoplasmic vesicle. The protein resides in the golgi apparatus. The protein localises to the trans-Golgi network. Its subcellular location is the cytoplasm. Functionally, during primary cilia disassembly, involved in cilia disassembly. Required specifically to control cilia retraction as well as the liberation and duplication of the basal body/centrosome. May act by stimulating AURKA activity at the basal body in a cell cycle-dependent manner. This is Ciliary microtubule-associated protein 3 (CIMAP3) from Bos taurus (Bovine).